The following is a 164-amino-acid chain: Phosphopantetheine adenylyltransferase (164 aa).

The protein belongs to the eukaryotic CoaD family.

It is found in the cytoplasm. It carries out the reaction (R)-4'-phosphopantetheine + ATP + H(+) = 3'-dephospho-CoA + diphosphate. The protein operates within cofactor biosynthesis; coenzyme A biosynthesis. Its function is as follows. Reversibly transfers an adenylyl group from ATP to 4'-phosphopantetheine, yielding dephospho-CoA (dPCoA) and pyrophosphate. This chain is Phosphopantetheine adenylyltransferase, found in Methanothermobacter thermautotrophicus (strain ATCC 29096 / DSM 1053 / JCM 10044 / NBRC 100330 / Delta H) (Methanobacterium thermoautotrophicum).